The following is a 911-amino-acid chain: Protein translocase subunit SecA (911 aa).

ATP is bound by residues Gln87, 105–109, and Asp512; that span reads GEGKT. A compositionally biased stretch (basic and acidic residues) spans 561 to 571; that stretch reads RHESRRIDNQL. Residues 561–583 are disordered; sequence RHESRRIDNQLRGRSGRQGDPGS. Zn(2+)-binding residues include Cys895, Cys897, Cys906, and His907.

It belongs to the SecA family. Monomer and homodimer. Part of the essential Sec protein translocation apparatus which comprises SecA, SecYEG and auxiliary proteins SecDF-YajC and YidC. The cofactor is Zn(2+).

Its subcellular location is the cell inner membrane. It is found in the cytoplasm. It catalyses the reaction ATP + H2O + cellular proteinSide 1 = ADP + phosphate + cellular proteinSide 2.. In terms of biological role, part of the Sec protein translocase complex. Interacts with the SecYEG preprotein conducting channel. Has a central role in coupling the hydrolysis of ATP to the transfer of proteins into and across the cell membrane, serving both as a receptor for the preprotein-SecB complex and as an ATP-driven molecular motor driving the stepwise translocation of polypeptide chains across the membrane. In Pseudomonas putida (strain W619), this protein is Protein translocase subunit SecA.